Here is a 216-residue protein sequence, read N- to C-terminus: Glycerol uptake facilitator protein-like 6 (216 aa).

2 consecutive transmembrane segments (helical) span residues 5-25 (LAEF…VVIA) and 30-50 (LAIG…FGGI). The short motif at 56-58 (NPA) is the NPA 1 element. Helical transmembrane passes span 72-92 (ADAI…SAAV), 114-134 (IGSG…LMVI), and 147-167 (FAGL…LNLT). Positions 172–174 (NPA) match the NPA 2 motif. Residues 191–213 (LWVYILAPEVGAILAAFCARVMG) form a helical membrane-spanning segment.

Belongs to the MIP/aquaporin (TC 1.A.8) family.

Its subcellular location is the cell membrane. In terms of biological role, probable transporter that facilitates the transmembrane diffusion of an unknown substrate. Is not permeable to water, dihydroxyacetone, glycerol, urea, H(2)O(2) and D/L-lactic acid. The polypeptide is Glycerol uptake facilitator protein-like 6 (Lactiplantibacillus plantarum (strain ATCC BAA-793 / NCIMB 8826 / WCFS1) (Lactobacillus plantarum)).